The following is a 1253-amino-acid chain: Cytoplasmic FMR1-interacting protein 2 (1253 aa).

Lys-1037 bears the N6-acetyllysine mark.

Belongs to the CYFIP family. In terms of assembly, component of the WAVE1 complex composed of ABI2, CYFIP2, BRK1, NCKAP1 and WASF1/WAVE1. Interacts with RAC1 (activated form) which causes the complex to dissociate, releasing activated WASF1. The complex can also be activated by NCK1. Interacts with SHANK3; the interaction mediates the association of SHANK3 with the WAVE1 complex. Interacts with FMR1; the interaction occurs in a RNA-dependent manner. Interacts with FXR1 and FXR2. Interacts with TMEM108 (via N-terminus); the interaction associates TMEM108 with the WAVE1 complex.

Its subcellular location is the cytoplasm. It is found in the nucleus. The protein localises to the perinuclear region. It localises to the synapse. The protein resides in the synaptosome. Involved in T-cell adhesion and p53-dependent induction of apoptosis. Does not bind RNA. As component of the WAVE1 complex, required for BDNF-NTRK2 endocytic trafficking and signaling from early endosomes. The sequence is that of Cytoplasmic FMR1-interacting protein 2 from Pongo abelii (Sumatran orangutan).